We begin with the raw amino-acid sequence, 176 residues long: Ribonuclease mitogillin (176 aa).

Positions methionine 1–arginine 27 are cleaved as a signal peptide. Intrachain disulfides connect cysteine 32-cysteine 174 and cysteine 102-cysteine 158. Residue histidine 76 is part of the active site. Glutamate 122 acts as the Proton acceptor in catalysis. Histidine 163 serves as the catalytic Proton donor.

Belongs to the ribonuclease U2 family.

The protein resides in the secreted. Its function is as follows. This purine-specific ribonuclease cleaves 28S RNA in eukaryotic ribosomes, inhibits protein synthesis, and shows antitumor activity. This chain is Ribonuclease mitogillin (mitF), found in Aspergillus fumigatus (strain ATCC MYA-4609 / CBS 101355 / FGSC A1100 / Af293) (Neosartorya fumigata).